The chain runs to 2637 residues: Nonribisomal peptide synthetase valB (2637 aa).

Residues 1–376 (MADGADYTQR…KALIRSPPST (376 aa)) form a condensation 1 region. Residues 413-803 (SQASRRPDAA…VGRRDNQIKL (391 aa)) form an adenylation 1 region. The 77-residue stretch at 946–1022 (PPANPPERAL…EAASEIKEPT (77 aa)) folds into the Carrier 1 domain. The residue at position 983 (serine 983) is an O-(pantetheine 4'-phosphoryl)serine. Residues 1016–1045 (SEIKEPTDASAPSPSPISRDLPLQKSNHDR) form a disordered region. The condensation 2 stretch occupies residues 1063 to 1506 (VEAIYPCTAL…LSRADMSLLQ (444 aa)). Residues 1524–1933 (AREVAHQRPL…EGRKDTRVKL (410 aa)) form an adenylation 2 region. The Carrier 2 domain occupies 2078–2154 (KEVTDDQAFM…YMVSKTSVSN (77 aa)). An O-(pantetheine 4'-phosphoryl)serine modification is found at serine 2115. Residues 2193–2582 (ESVAPATDAQ…LWMGAYLDAA (390 aa)) are condensation 3.

Belongs to the NRP synthetase family.

It functions in the pathway secondary metabolite biosynthesis. Its function is as follows. Nonribisomal peptide synthetase; part of the gene cluster that mediates the biosynthesis of valactamides. The first step of the pathway is performed by the highly reducing polyketide synthase valA that produces the polyketide part of the final products. An acetyl starter unit is incorporated by the ketosynthase domain of valA, and subsequently 6 malonyl-CoA-derived ketide units are incorporated and fully reduced to their respective alkane forms by the action of the ketoreductase, dehydratase, and enoylreductase domains (except for the penultimate unit, which is reduced only to the alkene). The final five ketide units are each proposed to be alpha-methylated by the methyltransferase domain before ketone reduction by the ketoreductase domain. The C1 domain of the nonribisomal peptide synthetase valB then catalyzes amide bond formation between the heptaketide chain and L-valine (L-Val) attached to the T1 domain. The C2 domain incorporating L-isoleucine (L-Ile) then carries out chain elongation, which is followed by macrolactonization by the Ct domain to release the final product. This chain is Nonribisomal peptide synthetase valB, found in Aspergillus terreus.